The sequence spans 192 residues: uncharacterized protein (192 aa).

A Nudix hydrolase domain is found at 29 to 160 (QRQAAVLIPV…PLDVYRRGNS (132 aa)). The Nudix box motif lies at 67–89 (GAVDSTDASLIAAALREAQEEVA). Mg(2+) is bound by residues Glu-83 and Glu-87.

The protein belongs to the Nudix hydrolase family. PCD1 subfamily. Requires Mn(2+) as cofactor. Mg(2+) serves as cofactor.

Its function is as follows. Probably mediates the hydrolysis of some nucleoside diphosphate derivatives. This is an uncharacterized protein from Salmonella dublin (strain CT_02021853).